A 202-amino-acid polypeptide reads, in one-letter code: LexA repressor (202 aa).

The segment at residues arginine 28–lysine 48 is a DNA-binding region (H-T-H motif). Residues serine 123 and lysine 160 each act as for autocatalytic cleavage activity in the active site.

Belongs to the peptidase S24 family. In terms of assembly, homodimer.

The catalysed reaction is Hydrolysis of Ala-|-Gly bond in repressor LexA.. Represses a number of genes involved in the response to DNA damage (SOS response), including recA and lexA. In the presence of single-stranded DNA, RecA interacts with LexA causing an autocatalytic cleavage which disrupts the DNA-binding part of LexA, leading to derepression of the SOS regulon and eventually DNA repair. This is LexA repressor from Pseudomonas chlororaphis (Pseudomonas aureofaciens).